An 809-amino-acid polypeptide reads, in one-letter code: LPS-assembly protein LptD (809 aa).

Positions 1-22 (MRRALRLLPLPLSIAICLPAMA) are cleaved as a signal peptide.

This sequence belongs to the LptD family. In terms of assembly, component of the lipopolysaccharide transport and assembly complex. Interacts with LptE and LptA.

The protein localises to the cell outer membrane. Functionally, together with LptE, is involved in the assembly of lipopolysaccharide (LPS) at the surface of the outer membrane. This Xanthomonas campestris pv. campestris (strain 8004) protein is LPS-assembly protein LptD.